We begin with the raw amino-acid sequence, 134 residues long: Mini-ribonuclease 3 (134 aa).

The active site involves aspartate 22.

It belongs to the MrnC RNase family. As to quaternary structure, homodimer. The cofactor is Mg(2+).

The protein resides in the cytoplasm. Its function is as follows. Involved in correct processing of both the 5' and 3' ends of 23S rRNA precursor. Processes 30S rRNA precursor transcript even in absence of ribonuclease 3 (Rnc); Rnc processes 30S rRNA into smaller rRNA precursors. The polypeptide is Mini-ribonuclease 3 (Staphylococcus aureus (strain NCTC 8325 / PS 47)).